Reading from the N-terminus, the 360-residue chain is MERNHNPDNCNVLNFFFADKKNKRRNFGQIVSDVGRICYSVSLSLGEPTTMGRNNLTRPSEFILLGLSSRPEDQKPLFAVFLPIYLITVIGNLLIILAIRSDTRLQTPMYFFLSILSFVDICYVTVIIPKMLVNFLSETKTISYSECLTQMYFFLAFGNTDSYLLAAMAIDRYVAICNPFHYITIMSHRCCVLLLVLSFCIPHFHSLLHILLTNQLIFCASNVIHHFFCDDQPVLKLSCSSHFVKEITVMTEGLAVIMTPFSCIIISYLRILITVLKIPSAAGKRKAFSTCGSHLTVVTLFYGSISYLYFQPLSNYTVKDQIATIIYTVLTPMLNPFIYSLRNKDMKQGLAKLMHRMKCQ.

Residues 1–75 (MERNHNPDNC…GLSSRPEDQK (75 aa)) are Extracellular-facing. N-linked (GlcNAc...) asparagine glycosylation occurs at Asn-55. A helical transmembrane segment spans residues 76–99 (PLFAVFLPIYLITVIGNLLIILAI). Residues 100–107 (RSDTRLQT) are Cytoplasmic-facing. Residues 108–129 (PMYFFLSILSFVDICYVTVIIP) form a helical membrane-spanning segment. At 130-150 (KMLVNFLSETKTISYSECLTQ) the chain is on the extracellular side. A disulfide bond links Cys-147 and Cys-239. The chain crosses the membrane as a helical span at residues 151-170 (MYFFLAFGNTDSYLLAAMAI). Residues 171-189 (DRYVAICNPFHYITIMSHR) are Cytoplasmic-facing. A helical membrane pass occupies residues 190–208 (CCVLLLVLSFCIPHFHSLL). Residues 209–246 (HILLTNQLIFCASNVIHHFFCDDQPVLKLSCSSHFVKE) lie on the Extracellular side of the membrane. The helical transmembrane segment at 247–269 (ITVMTEGLAVIMTPFSCIIISYL) threads the bilayer. At 270–286 (RILITVLKIPSAAGKRK) the chain is on the cytoplasmic side. The helical transmembrane segment at 287–309 (AFSTCGSHLTVVTLFYGSISYLY) threads the bilayer. The Extracellular portion of the chain corresponds to 310 to 321 (FQPLSNYTVKDQ). Residue Asn-315 is glycosylated (N-linked (GlcNAc...) asparagine). Residues 322 to 341 (IATIIYTVLTPMLNPFIYSL) traverse the membrane as a helical segment. Residues 342–360 (RNKDMKQGLAKLMHRMKCQ) are Cytoplasmic-facing.

It belongs to the G-protein coupled receptor 1 family.

Its subcellular location is the cell membrane. In terms of biological role, odorant receptor. This is Olfactory receptor 1L1 (OR1L1) from Homo sapiens (Human).